The primary structure comprises 255 residues: Thiazole synthase (255 aa).

The Schiff-base intermediate with DXP role is filled by lysine 97. 1-deoxy-D-xylulose 5-phosphate-binding positions include glycine 158, 184 to 185 (AG), and 206 to 207 (NT).

Belongs to the ThiG family. Homotetramer. Forms heterodimers with either ThiH or ThiS.

Its subcellular location is the cytoplasm. The enzyme catalyses [ThiS sulfur-carrier protein]-C-terminal-Gly-aminoethanethioate + 2-iminoacetate + 1-deoxy-D-xylulose 5-phosphate = [ThiS sulfur-carrier protein]-C-terminal Gly-Gly + 2-[(2R,5Z)-2-carboxy-4-methylthiazol-5(2H)-ylidene]ethyl phosphate + 2 H2O + H(+). It functions in the pathway cofactor biosynthesis; thiamine diphosphate biosynthesis. In terms of biological role, catalyzes the rearrangement of 1-deoxy-D-xylulose 5-phosphate (DXP) to produce the thiazole phosphate moiety of thiamine. Sulfur is provided by the thiocarboxylate moiety of the carrier protein ThiS. In vitro, sulfur can be provided by H(2)S. This Acetivibrio thermocellus (strain ATCC 27405 / DSM 1237 / JCM 9322 / NBRC 103400 / NCIMB 10682 / NRRL B-4536 / VPI 7372) (Clostridium thermocellum) protein is Thiazole synthase.